Consider the following 63-residue polypeptide: Cytochrome c oxidase subunit 5C (63 aa).

A helical membrane pass occupies residues 16–34 (VVKEIFIGLTLGLVAGGMW).

Belongs to the cytochrome c oxidase subunit 5C family.

Its subcellular location is the mitochondrion inner membrane. Its function is as follows. This protein is one of the nuclear-coded polypeptide chains of cytochrome c oxidase, the terminal oxidase in mitochondrial electron transport. This Hordeum vulgare (Barley) protein is Cytochrome c oxidase subunit 5C (COX5C).